Here is a 648-residue protein sequence, read N- to C-terminus: TBC1 domain family member 17 (648 aa).

The tract at residues 218-309 (DPYSTTFSSF…PELKNRIFSG (92 aa)) is required for interaction with OPTN. Residues 240 to 259 (PQPEGAASDLPPPPDDEPEP) are disordered. The 211-residue stretch at 310–520 (GLSPSLRREA…RLWEVLWTGL (211 aa)) folds into the Rab-GAP TBC domain. Residues 594 to 648 (LAPPAEPHSPSPTASPLPLSPTRAPPTPPPSTDTAPQPDSSLEILPEEEDEGADS) are disordered. Pro residues predominate over residues 597–624 (PAEPHSPSPTASPLPLSPTRAPPTPPPS). Phosphoserine is present on residues S602 and S604. T606 is subject to Phosphothreonine. Phosphoserine is present on S608. T615 carries the post-translational modification Phosphothreonine. A compositionally biased stretch (low complexity) spans 625–634 (TDTAPQPDSS). Over residues 638 to 648 (LPEEEDEGADS) the composition is skewed to acidic residues.

As to quaternary structure, interacts with OPTN; this interaction mediates TBC1D17 transient association with Rab8.

Its subcellular location is the cytoplasmic vesicle. The protein localises to the autophagosome. It is found in the cytoplasm. The protein resides in the recycling endosome. In terms of biological role, probable RAB GTPase-activating protein that inhibits RAB8A/B function. Reduces Rab8 recruitment to tubules emanating from the endocytic recycling compartment (ERC) and inhibits Rab8-mediated endocytic trafficking, such as that of transferrin receptor (TfR). Involved in regulation of autophagy. The protein is TBC1 domain family member 17 of Homo sapiens (Human).